A 335-amino-acid chain; its full sequence is MSAKLGKSSSLLTQTSEECNGILTEKMEEEEQTCDPDSSLHWSSSYSPETFRQQFRQFGYQDSPGPHEALSRLWELCHLWLRPEVHTKEQILELLVLEQFLAILPKELQAWVQKHHPENGEETVTMLEDVERELDGPKQIFFGRRKDMIAEKLAPSEITEELPSSQLMPVKKQLQGASWELQSLRPHDEDIKTTNVKSASRQKTSLGIELHCNVSNILHMNGSQSSTYRGTYEQDGRFEKRQGNPSWKKQQKCDECGKIFSQSSALILHQRIHSGKKPYACDECAKAFSRSAILIQHRRTHTGEKPYKCHDCGKAFSQSSNLFRHRKRHIRKKVP.

Residues 52 to 134 enclose the SCAN box domain; that stretch reads RQQFRQFGYQ…TMLEDVEREL (83 aa). 3 consecutive C2H2-type zinc fingers follow at residues 251–273, 279–301, and 307–329; these read QKCDECGKIFSQSSALILHQRIH, YACDECAKAFSRSAILIQHRRTH, and YKCHDCGKAFSQSSNLFRHRKRH.

The protein belongs to the krueppel C2H2-type zinc-finger protein family. In terms of assembly, isoforms 1 and 2 can both homo- and hetero-associate. As to expression, expressed strongly in liver, moderately in skeletal muscle and weakly in kidney, pancreas, spleen and prostate.

It is found in the nucleus. The protein resides in the cytoplasm. Isoform 1 and isoform 2 act as DNA-dependent transcriptional repressors. The chain is Zinc finger protein 396 (ZNF396) from Homo sapiens (Human).